The sequence spans 556 residues: Formate--tetrahydrofolate ligase (556 aa).

Residue 65–72 coordinates ATP; that stretch reads TPAGEGKT.

The protein belongs to the formate--tetrahydrofolate ligase family.

The catalysed reaction is (6S)-5,6,7,8-tetrahydrofolate + formate + ATP = (6R)-10-formyltetrahydrofolate + ADP + phosphate. It participates in one-carbon metabolism; tetrahydrofolate interconversion. The protein is Formate--tetrahydrofolate ligase of Ruminiclostridium cellulolyticum (strain ATCC 35319 / DSM 5812 / JCM 6584 / H10) (Clostridium cellulolyticum).